Consider the following 253-residue polypeptide: Probable transcriptional regulatory protein Mmar10_2433 (253 aa).

This sequence belongs to the TACO1 family.

It is found in the cytoplasm. This is Probable transcriptional regulatory protein Mmar10_2433 from Maricaulis maris (strain MCS10) (Caulobacter maris).